The primary structure comprises 79 residues: D-alanyl carrier protein (79 aa).

The region spanning 1–77 is the Carrier domain; sequence MTVEEKIIDA…KIVEGVKELQ (77 aa). An O-(pantetheine 4'-phosphoryl)serine modification is found at serine 35.

The protein belongs to the DltC family. 4'-phosphopantetheine is transferred from CoA to a specific serine of apo-DCP.

Its subcellular location is the cytoplasm. The protein operates within cell wall biogenesis; lipoteichoic acid biosynthesis. Its function is as follows. Carrier protein involved in the D-alanylation of lipoteichoic acid (LTA). The loading of thioester-linked D-alanine onto DltC is catalyzed by D-alanine--D-alanyl carrier protein ligase DltA. The DltC-carried D-alanyl group is further transferred to cell membrane phosphatidylglycerol (PG) by forming an ester bond, probably catalyzed by DltD. D-alanylation of LTA plays an important role in modulating the properties of the cell wall in Gram-positive bacteria, influencing the net charge of the cell wall. The polypeptide is D-alanyl carrier protein (Streptococcus uberis (strain ATCC BAA-854 / 0140J)).